The following is a 189-amino-acid chain: MRNENGYNPKLISTRELFKSDLDKGKARLQVPFNQVKTPDFLTEDETRIIHENAMKIRDDGVPVNLVDPRMNKHALELRKWKMKGNWNYVFVKGWNDVLDANKSNSFKEKDVFPLWSFRSGTGKLCFALTPKIPATALLQENLAVAAMVLLLEVNLVRTKERELVFLYYHKKIHQATTTHNKCKVSWLY.

The segment at residues 33 to 133 (FNQVKTPDFL…KLCFALTPKI (101 aa)) is a DNA-binding region (TF-B3).

Its subcellular location is the nucleus. In Arabidopsis thaliana (Mouse-ear cress), this protein is B3 domain-containing protein At2g32645.